The sequence spans 200 residues: MEEEIKETSEDKEEENTEAEAVENNEKSEENAGNVEEDEITALKKRIEELENESADMKNKYMYAMAEAENIRKRTAKEKADSIKRANKGLLLSLLTFMDNFERALKAGEQDSNVQGSEYYKGIELIHKQFIDFMHDNGVSEIESLGEEFDPNVHEALTMIEVPDIDKEKVVEVYAKGYKLNDELLRTAKVVVGKPAAAKE.

The segment covering 1–23 (MEEEIKETSEDKEEENTEAEAVE) has biased composition (acidic residues). The tract at residues 1-39 (MEEEIKETSEDKEEENTEAEAVENNEKSEENAGNVEEDE) is disordered.

Belongs to the GrpE family. Homodimer.

The protein localises to the cytoplasm. Functionally, participates actively in the response to hyperosmotic and heat shock by preventing the aggregation of stress-denatured proteins, in association with DnaK and GrpE. It is the nucleotide exchange factor for DnaK and may function as a thermosensor. Unfolded proteins bind initially to DnaJ; upon interaction with the DnaJ-bound protein, DnaK hydrolyzes its bound ATP, resulting in the formation of a stable complex. GrpE releases ADP from DnaK; ATP binding to DnaK triggers the release of the substrate protein, thus completing the reaction cycle. Several rounds of ATP-dependent interactions between DnaJ, DnaK and GrpE are required for fully efficient folding. The polypeptide is Protein GrpE (Brachyspira hyodysenteriae (strain ATCC 49526 / WA1)).